Reading from the N-terminus, the 597-residue chain is Polyphenol oxidase latent form, chloroplastic (597 aa).

A chloroplast-targeting transit peptide spans 1–49 (MATAPSPTTMGTYSSLISTNSFSTFLPNKSQLSLSGKSKHYVARRSSIS). The tract at residues 49-70 (SCKATNNNNSNNQNEQQEESSR) is disordered. A thylakoid-targeting transit peptide spans 50–101 (CKATNNNNSNNQNEQQEESSRLLGKLDRRNILIGLGGLYGATTLDRKPFAFA). A compositionally biased stretch (low complexity) spans 54 to 63 (NNNNSNNQNE). Cystine bridges form between Cys-112-Cys-128 and Cys-127-Cys-189. Residues His-188, His-209, His-218, His-341, His-345, and His-375 each contribute to the Cu cation site. Residues 192-209 (CNGAYPQVGFTDNDIQVH) constitute a cross-link (2'-(S-cysteinyl)-histidine (Cys-His)).

The protein belongs to the tyrosinase family. As to quaternary structure, monomer. Cu(2+) is required as a cofactor. In terms of tissue distribution, expressed in immature-green fruit.

It is found in the plastid. Its subcellular location is the chloroplast thylakoid lumen. It catalyses the reaction 2 catechol + O2 = 2 1,2-benzoquinone + 2 H2O. Its activity is regulated as follows. Activated in the presence of substrate at low pH. Specific activity fluctuates during fruit ripening, starting at immature-green stage, reaching a peak at the breaker stage, followed by a sharp decrease until the half-ripe stage to remain stable during the following development stages. Triggered by CuSO(4) and by low concentrations of SDS. Repressed by several inhibitors including 4-hexylresorcinol, ascorbic acid, benzoic acid, kojic acid, glutathione (reduced form), L-cysteine and sodium metabisulfite. Inhibited by various salt such as FeSO(4), KCl, NaCl, CaCl(2), MnCl(2), NiCl(2) and AlCl(3). Spontaneously activated during storage at 4 degrees Celsius. Catalyzes the oxidation of mono- and o-diphenols to o-diquinones. Uses preferentially 4-methylcatechol and chlorogenic acid as substrates, followed by caffeic acid, pyrogallol, and catechol, but barely active toward dopamine and L-dopa. No activity detected with monophenols (e.g. phenol and tyramine). This chain is Polyphenol oxidase latent form, chloroplastic, found in Prunus armeniaca (Apricot).